A 323-amino-acid chain; its full sequence is Methionyl-tRNA formyltransferase (323 aa).

115-118 is a binding site for (6S)-5,6,7,8-tetrahydrofolate; it reads SLLP.

It belongs to the Fmt family.

The enzyme catalyses L-methionyl-tRNA(fMet) + (6R)-10-formyltetrahydrofolate = N-formyl-L-methionyl-tRNA(fMet) + (6S)-5,6,7,8-tetrahydrofolate + H(+). In terms of biological role, attaches a formyl group to the free amino group of methionyl-tRNA(fMet). The formyl group appears to play a dual role in the initiator identity of N-formylmethionyl-tRNA by promoting its recognition by IF2 and preventing the misappropriation of this tRNA by the elongation apparatus. This chain is Methionyl-tRNA formyltransferase, found in Blochmanniella floridana.